The following is a 964-amino-acid chain: Lon protease homolog, mitochondrial (964 aa).

A Lon N-terminal domain is found at 89 to 300 (VIALPLPHRP…LTLELVKKEM (212 aa)). Residue 455–462 (GPPGVGKT) coordinates ATP. Residues 663 to 740 (GVSNEPDHES…TSKGNKGTDG (78 aa)) form a disordered region. The span at 673–687 (VSASVTEESGNGDNT) shows a compositional bias: polar residues. A compositionally biased stretch (basic and acidic residues) spans 688-698 (TTKDEILKDPA). Positions 703-712 (SVTNNVTNPA) are enriched in polar residues. The Lon proteolytic domain occupies 773 to 957 (HTPVGVVMGL…SEIYDLAFQS (185 aa)). Active-site residues include serine 863 and lysine 906.

The protein belongs to the peptidase S16 family. In terms of assembly, homoheptamer. Organized in a ring with a central cavity.

The protein resides in the mitochondrion matrix. It carries out the reaction Hydrolysis of proteins in presence of ATP.. Its function is as follows. ATP-dependent serine protease that mediates the selective degradation of misfolded, unassembled or oxidatively damaged polypeptides as well as certain short-lived regulatory proteins in the mitochondrial matrix. May also have a chaperone function in the assembly of inner membrane protein complexes. Participates in the regulation of mitochondrial gene expression and in the maintenance of the integrity of the mitochondrial genome. Binds to mitochondrial DNA in a site-specific manner. This chain is Lon protease homolog, mitochondrial (LON2), found in Zea mays (Maize).